The primary structure comprises 1064 residues: WD repeat-containing protein on Y chromosome (1064 aa).

WD repeat units follow at residues 153–197, 326–365, 369–408, 459–498, 511–550, 598–638, 746–785, and 827–866; these read EEVT…IRTA, RVPLGVSTFFVAESHNIVVTGGPDTFVRIWDVYIPTEPSA, GHNGGIVMVFVQPEENKVYSVDYQKIIKVWDLQEHTLLQT, THAAPVSVVLYNRLFRNIVTCGLDSYIIVWDPWSGRRKII, IIDIEITAATFDPLEQFLLTGARDGTLKIWNYNNAVVVRN, FHTD…RRYS, KTGDCVLTMCTDRKNRYIYTGTAFGYIKVWHIVNYPEAEK, and AHLKAINSIAFINLPKIVFRGSHDYSCRLWTQGGRYLGTL. The span at 914–924 shows a compositional bias: basic and acidic residues; it reads PAKRAEVKAPE. Disordered stretches follow at residues 914-935 and 1023-1064; these read PAKRAEVKAPEDRDEETAQTDD and GSAL…QQSE. Positions 925–935 are enriched in acidic residues; it reads DRDEETAQTDD.

This is WD repeat-containing protein on Y chromosome from Drosophila pseudoobscura pseudoobscura (Fruit fly).